Consider the following 195-residue polypeptide: Probable DNA-directed RNA polymerase subunit delta (195 aa).

One can recognise an HTH HARE-type domain in the interval 14–83; that stretch reads LSMIEVARAI…GDNKWGLRSW (70 aa). Composition is skewed to acidic residues over residues 120-138 and 145-195; these read DSDAIDYNADDPEDEDAYE and YDDE…TSEE. The tract at residues 120-195 is disordered; that stretch reads DSDAIDYNAD…SDDDAETSEE (76 aa).

This sequence belongs to the RpoE family. RNAP is composed of a core of 2 alpha, a beta and a beta' subunits. The core is associated with a delta subunit and one of several sigma factors.

Functionally, participates in both the initiation and recycling phases of transcription. In the presence of the delta subunit, RNAP displays an increased specificity of transcription, a decreased affinity for nucleic acids, and an increased efficiency of RNA synthesis because of enhanced recycling. This Streptococcus pneumoniae serotype 2 (strain D39 / NCTC 7466) protein is Probable DNA-directed RNA polymerase subunit delta.